A 358-amino-acid polypeptide reads, in one-letter code: Biotin synthase (358 aa).

Residues 55-278 form the Radical SAM core domain; it reads NKVRIHILDN…VNPDSEIRIA (224 aa). The [4Fe-4S] cluster site is built by cysteine 70, cysteine 74, and cysteine 77. [2Fe-2S] cluster contacts are provided by cysteine 114, cysteine 146, cysteine 206, and arginine 276.

Belongs to the radical SAM superfamily. Biotin synthase family. Homodimer. [4Fe-4S] cluster serves as cofactor. It depends on [2Fe-2S] cluster as a cofactor.

The enzyme catalyses (4R,5S)-dethiobiotin + (sulfur carrier)-SH + 2 reduced [2Fe-2S]-[ferredoxin] + 2 S-adenosyl-L-methionine = (sulfur carrier)-H + biotin + 2 5'-deoxyadenosine + 2 L-methionine + 2 oxidized [2Fe-2S]-[ferredoxin]. The protein operates within cofactor biosynthesis; biotin biosynthesis; biotin from 7,8-diaminononanoate: step 2/2. Catalyzes the conversion of dethiobiotin (DTB) to biotin by the insertion of a sulfur atom into dethiobiotin via a radical-based mechanism. The polypeptide is Biotin synthase (Leptospira borgpetersenii serovar Hardjo-bovis (strain JB197)).